Here is a 47-residue protein sequence, read N- to C-terminus: Defensin NsD7 (47 aa).

4 disulfide bridges follow: Cys3-Cys47, Cys14-Cys34, Cys20-Cys41, and Cys24-Cys43. A 1,2-diacyl-sn-glycero-3-phosphate contacts are provided by Lys4, His33, Lys36, and Arg39.

The protein belongs to the DEFL family. In terms of assembly, in the presence of phosphatidic acid (PA), forms right-handed double helices which tend to bundle into fibrils. Each helix is a repetition of dimers containing 2 bound molecules of PA per dimer. Dimers are arranged orthogonally in a tip-to-tip configuration with 1 molecule of PA located at the dimer contact interface. Association of 2 helices to form a double helix depends on intercalating isoleucine residues Ile-15 and Ile-37. Bundling of double helices into fibrils depends on Arg-26.

It localises to the vacuole. Its function is as follows. Plant defense peptide. Disrupts membranes containing phosphatidic acid (PA) via a PA-dependent oligomerization process. The chain is Defensin NsD7 from Nicotiana suaveolens (Australian tobacco).